Consider the following 590-residue polypeptide: PWWP domain-containing protein 2B (590 aa).

4 disordered regions span residues 52–110, 182–347, 360–398, and 426–467; these read APLP…PPLP, KSTL…EHEP, YLRDSSPAPCADGPAGGLADLSSGSSGEDDDFKSCPQGP, and DSLD…TVPP. Residue S84 is modified to Phosphoserine. The span at 99–110 shows a compositional bias: pro residues; sequence PEPPPPLVPPLP. 2 positions are modified to phosphoserine: S186 and S206. Residues 208 to 217 are compositionally biased toward basic and acidic residues; that stretch reads PDRELRKPEE. S250 carries the phosphoserine modification. Residues 296–305 show a composition bias toward basic and acidic residues; sequence VLDRESRDRP. Low complexity predominate over residues 376-385; sequence GLADLSSGSS. S447 carries the post-translational modification Phosphoserine. One can recognise a PWWP domain in the interval 490 to 550; the sequence is VGDIVWGKIH…ISKLSPFSEF (61 aa).

Component of a MTA1-specific subcomplex of the NuRD complex composed of PWWP2B, MTA1 and HDAC1 but does not contain CHD4 and MBD3. Interacts with MTA1 and HDAC1. Interacts with MTA2, MTA3, HDAC2, RBBP4, RBBP7, BRCC3 and ZNF516. Does not interact with CHD4 and MBD3. Deubiquitinated by BRCC3; leading to its stabilization.

Its function is as follows. Chromatin-binding protein that acts as an adapter between distinct nucleosome components (H3K36me3 or H2A.Z) and chromatin-modifying complexes, contributing to the regulation of the levels of histone acetylation at actively transcribed genes. Competes with CHD4 and MBD3 for interaction with MTA1 to form a NuRD subcomplex, preventing the formation of full NuRD complex (containing CHD4 and MBD3), leading to recruitment of HDACs to gene promoters resulting in turn in the deacetylation of nearby H3K27 and H2A.Z. Plays a role in facilitating transcriptional elongation through regulation of histone acetylation. Negatively regulates brown adipocyte thermogenesis by interacting with and stabilizing HDAC1 at the UCP1 gene promoter, thereby promoting histone deacetylation at the promoter leading to the repression of UCP1 expression. The chain is PWWP domain-containing protein 2B (PWWP2B) from Homo sapiens (Human).